The sequence spans 513 residues: Putative zinc finger CCCH domain-containing protein 51 (513 aa).

The interval 155–180 (SMPRNSPNAGRNLVGHPHSSSKSSSK) is disordered. Over residues 170 to 180 (HPHSSSKSSSK) the composition is skewed to low complexity. The segment at 176–204 (KSSSKPCHFHFFRGYCKKGVNCQFFHGSV) adopts a C3H1-type zinc-finger fold. The HTH OST-type domain maps to 218–299 (SLSKLDMEIR…HGQYHVVLVE (82 aa)). The 87-residue stretch at 325-411 (NQIYMTFPVH…SELRMTWLKS (87 aa)) folds into the RRM domain.

The chain is Putative zinc finger CCCH domain-containing protein 51 from Oryza sativa subsp. japonica (Rice).